A 294-amino-acid polypeptide reads, in one-letter code: tRNA dimethylallyltransferase (294 aa).

9-16 (GPTASGKS) contributes to the ATP binding site. Residue 11–16 (TASGKS) participates in substrate binding. The interval 155-159 (QRVIR) is interaction with substrate tRNA.

It belongs to the IPP transferase family. As to quaternary structure, monomer. Mg(2+) serves as cofactor.

It catalyses the reaction adenosine(37) in tRNA + dimethylallyl diphosphate = N(6)-dimethylallyladenosine(37) in tRNA + diphosphate. Its function is as follows. Catalyzes the transfer of a dimethylallyl group onto the adenine at position 37 in tRNAs that read codons beginning with uridine, leading to the formation of N6-(dimethylallyl)adenosine (i(6)A). The protein is tRNA dimethylallyltransferase of Leuconostoc citreum (strain KM20).